Reading from the N-terminus, the 368-residue chain is tRNA-specific 2-thiouridylase MnmA (368 aa).

Residues 12-19 (AMSGGVDS) and Met-38 contribute to the ATP site. Cys-110 serves as the catalytic Nucleophile. Cys-110 and Cys-207 are disulfide-bonded. An ATP-binding site is contributed by Gly-134. The segment at 157 to 159 (KDQ) is interaction with tRNA. Residue Cys-207 is the Cysteine persulfide intermediate of the active site. Positions 312–313 (RY) are interaction with tRNA.

This sequence belongs to the MnmA/TRMU family.

It localises to the cytoplasm. The enzyme catalyses S-sulfanyl-L-cysteinyl-[protein] + uridine(34) in tRNA + AH2 + ATP = 2-thiouridine(34) in tRNA + L-cysteinyl-[protein] + A + AMP + diphosphate + H(+). Its function is as follows. Catalyzes the 2-thiolation of uridine at the wobble position (U34) of tRNA, leading to the formation of s(2)U34. The sequence is that of tRNA-specific 2-thiouridylase MnmA from Geobacter metallireducens (strain ATCC 53774 / DSM 7210 / GS-15).